The primary structure comprises 2000 residues: E3 ubiquitin-protein ligase TTC3 (2000 aa).

The tract at residues 20–249 (MDDFAEGGLS…RHSCMQCVKQ (230 aa)) is interaction with POLG. TPR repeat units lie at residues 250–283 (GELMKMRGNEEFAKEKFEIAVIYYTRAIEYRPEN) and 284–317 (HLLYGNRALCFLRMGQFRNALSDGKRAIVLKNTW). S397 is modified (phosphoserine). The disordered stretch occupies residues 442–478 (CDCHPEFLPPPSQPPRHKGKQKSRNNESEKPSSNSQV). TPR repeat units follow at residues 556 to 592 (VLVVYGLAVSLLGIGRPEELSEAENQFKRIIEHYPNE) and 596 to 629 (CLAYCGIGKVYLKKNRFLEALNHFEKAKTLICRL). The interval 804 to 828 (AQERMEEDLRESNPPKPEEPEETVE) is disordered. S1029 carries the post-translational modification Phosphoserine. Disordered regions lie at residues 1041-1087 (NKGK…GPFA), 1233-1308 (FQPD…PEDA), 1423-1448 (QSSTADARTALSEPEGNSRHSGSSDS), 1806-1839 (LEVKKASQVSPSEQNPEADEKPSGQATRSSQSQK), and 1894-1947 (EEQK…VPAP). Residues 1059-1070 (GTASVTPSSETV) are compositionally biased toward polar residues. Phosphoserine is present on S1080. Residues 1268 to 1277 (DSDSSSGSAS) show a composition bias toward low complexity. Residues 1829 to 1839 (GQATRSSQSQK) show a composition bias toward polar residues. The segment covering 1894-1911 (EEQKKKKPNPGKDKKTSE) has biased composition (basic and acidic residues). A compositionally biased stretch (low complexity) spans 1912–1934 (AHPAASVSKSSPSPPLAAAGPSA). An RING-type; atypical zinc finger spans residues 1952-1991 (CQICHEIFKSKNMRVLKCGHKFHKGCFKQWLKGQSTCPTC).

Interacts (when phosphorylated on Ser-397) with AKT1, AKT2 and AKT3 (when phosphorylated). Interacts with CIT. Interacts with POLG. Interacts with HSP70. Interacts with SMURF2. Phosphorylation on Ser-397 by Akt is required for ubiquitin ligase activity. Post-translationally, proteolytically cleaved into differently sized N- and C-terminal fragments.

It localises to the nucleus. Its subcellular location is the cytoplasm. The protein localises to the golgi apparatus. It catalyses the reaction S-ubiquitinyl-[E2 ubiquitin-conjugating enzyme]-L-cysteine + [acceptor protein]-L-lysine = [E2 ubiquitin-conjugating enzyme]-L-cysteine + N(6)-ubiquitinyl-[acceptor protein]-L-lysine.. The protein operates within protein modification; protein ubiquitination. Functionally, E3 ubiquitin-protein ligase which catalyzes the formation of 'Lys-48'-polyubiquitin chains. Mediates the ubiquitination and subsequent degradation of phosphorylated Akt (AKT1, AKT2 and AKT3) in the nucleus. Acts as a terminal regulator of Akt signaling after activation; its phosphorylation by Akt, which is a prerequisite for ubiquitin ligase activity, suggests the existence of a regulation mechanism required to control Akt levels after activation. Positively regulates TGFB1-induced epithelial-mesenchymal transition and myofibroblast differentiation by mediating the ubiquitination and subsequent degradation of SMURF2. Regulates neuronal differentiation by regulating actin remodeling and Golgi organization via a signaling cascade involving RHOA, CIT and ROCK. Inhibits cell proliferation. This is E3 ubiquitin-protein ligase TTC3 from Rattus norvegicus (Rat).